Reading from the N-terminus, the 461-residue chain is Adenine DNA glycosylase (461 aa).

Catalysis depends on E69, which acts as the Proton donor/acceptor. [4Fe-4S] cluster is bound by residues C226, C233, C236, and C242. Residues 296–437 (QREERALVVI…RAALEIKKRK (142 aa)) form the Nudix hydrolase domain. A Nudix box motif is present at residues 340–366 (FGQESWPKDMDAEFQKSIAQWISNDSR).

This sequence belongs to the Nth/MutY family. In terms of assembly, monomer. Requires [4Fe-4S] cluster as cofactor.

The catalysed reaction is Hydrolyzes free adenine bases from 7,8-dihydro-8-oxoguanine:adenine mismatched double-stranded DNA, leaving an apurinic site.. Its function is as follows. Adenine glycosylase active on G-A mispairs. Has glycosylase and nicking activities and is active at A/G and A/GO sites. This chain is Adenine DNA glycosylase (myh1), found in Schizosaccharomyces pombe (strain 972 / ATCC 24843) (Fission yeast).